The sequence spans 690 residues: Guanylate cyclase soluble subunit alpha-1 (690 aa).

The residue at position 266 (serine 266) is a Phosphoserine. Residues 480-607 (TMLFSDIVGF…NNVTLANKFE (128 aa)) form the Guanylate cyclase domain.

It belongs to the adenylyl cyclase class-4/guanylyl cyclase family. The active enzyme is formed by a heterodimer of an alpha and a beta subunit. Heterodimer with GUCY1B1. The cofactor is Mg(2+). Mn(2+) is required as a cofactor.

The protein localises to the cytoplasm. The enzyme catalyses GTP = 3',5'-cyclic GMP + diphosphate. With respect to regulation, activated by nitric oxide in the presence of magnesium or manganese ions. The sequence is that of Guanylate cyclase soluble subunit alpha-1 (Gucy1a1) from Rattus norvegicus (Rat).